The following is a 587-amino-acid chain: Integrator complex subunit 14 (587 aa).

In terms of domain architecture, VWFA spans 3–113; the sequence is TLIALDASLS…NILQVVVFTD (111 aa). Disordered regions lie at residues 190–211 and 304–331; these read KSSD…KSEL and REKS…DTSN.

Belongs to the Integrator subunit 14 family. As to quaternary structure, belongs to the multiprotein complex Integrator, at least composed of IntS1, IntS2, IntS3, IntS4, omd/IntS5, IntS6, defl/IntS7, IntS8, IntS9, IntS10, IntS11, IntS12, asun/IntS13, IntS14 and IntS15. The core complex associates with protein phosphatase 2A subunits mts/PP2A and Pp2A-29B, to form the Integrator-PP2A (INTAC) complex.

It localises to the nucleus. Its function is as follows. Component of the integrator complex, a multiprotein complex that terminates RNA polymerase II (Pol II) transcription in the promoter-proximal region of genes. The integrator complex provides a quality checkpoint during transcription elongation by driving premature transcription termination of transcripts that are unfavorably configured for transcriptional elongation: the complex terminates transcription by (1) catalyzing dephosphorylation of the C-terminal domain (CTD) of Pol II subunit Polr2A/Rbp1 and Spt5, and (2) degrading the exiting nascent RNA transcript via endonuclease activity. The integrator complex is also involved in the 3'-end processing of the U7 snRNA, and also the spliceosomal snRNAs U1, U2, U4 and U5. The chain is Integrator complex subunit 14 from Drosophila melanogaster (Fruit fly).